The primary structure comprises 257 residues: Large ribosomal subunit protein uL3 (257 aa).

The tract at residues 232–257 is disordered; sequence LKAPKKQKTKVETNQVNPKIEEEKTK.

This sequence belongs to the universal ribosomal protein uL3 family. In terms of assembly, part of the 50S ribosomal subunit. Forms a cluster with proteins L14 and L19.

Functionally, one of the primary rRNA binding proteins, it binds directly near the 3'-end of the 23S rRNA, where it nucleates assembly of the 50S subunit. This Mycoplasma genitalium (strain ATCC 33530 / DSM 19775 / NCTC 10195 / G37) (Mycoplasmoides genitalium) protein is Large ribosomal subunit protein uL3.